A 56-amino-acid polypeptide reads, in one-letter code: uncharacterized protein (56 aa).

A run of 2 helical transmembrane segments spans residues 6-26 and 29-49; these read VILLAVMICLVSAITVFLLNG and VDFLDIGGTIIGCFLGIFVVV.

The protein localises to the cell membrane. This is an uncharacterized protein from Bacillus subtilis (strain 168).